A 189-amino-acid chain; its full sequence is Protein CotJC (189 aa).

Belongs to the manganese catalase family.

Its function is as follows. The cotJ operon proteins affect spore coat composition. They are either required for the normal formation of the inner layers of the coat or are themselves structural components of the coat. The protein is Protein CotJC (cotJC) of Bacillus subtilis (strain 168).